Here is a 443-residue protein sequence, read N- to C-terminus: tRNA-2-methylthio-N(6)-dimethylallyladenosine synthase (443 aa).

Positions 3–120 (SKLYIRTFGC…LPDLIDARRR (118 aa)) constitute an MTTase N-terminal domain. [4Fe-4S] cluster-binding residues include cysteine 12, cysteine 49, cysteine 83, cysteine 157, cysteine 161, and cysteine 164. A Radical SAM core domain is found at 143 to 375 (RTEGSTAFVS…QEKIQLNAQA (233 aa)). The region spanning 378-441 (QGMVDTVQRI…SHTLRGEISD (64 aa)) is the TRAM domain.

The protein belongs to the methylthiotransferase family. MiaB subfamily. As to quaternary structure, monomer. [4Fe-4S] cluster serves as cofactor.

It localises to the cytoplasm. The catalysed reaction is N(6)-dimethylallyladenosine(37) in tRNA + (sulfur carrier)-SH + AH2 + 2 S-adenosyl-L-methionine = 2-methylsulfanyl-N(6)-dimethylallyladenosine(37) in tRNA + (sulfur carrier)-H + 5'-deoxyadenosine + L-methionine + A + S-adenosyl-L-homocysteine + 2 H(+). Functionally, catalyzes the methylthiolation of N6-(dimethylallyl)adenosine (i(6)A), leading to the formation of 2-methylthio-N6-(dimethylallyl)adenosine (ms(2)i(6)A) at position 37 in tRNAs that read codons beginning with uridine. The sequence is that of tRNA-2-methylthio-N(6)-dimethylallyladenosine synthase from Nitrosomonas europaea (strain ATCC 19718 / CIP 103999 / KCTC 2705 / NBRC 14298).